Reading from the N-terminus, the 192-residue chain is Phosphoheptose isomerase (192 aa).

Positions 37 to 192 constitute an SIS domain; it reads LADSFKAGGK…IQLIEKEMVK (156 aa). 52–54 serves as a coordination point for substrate; it reads NGG. Zn(2+) contacts are provided by H61 and E65. Residues E65, 93–94, 119–121, S124, and Q172 each bind substrate; these read ND and STS. 2 residues coordinate Zn(2+): Q172 and H180.

Belongs to the SIS family. GmhA subfamily. Homotetramer. Zn(2+) serves as cofactor.

The protein localises to the cytoplasm. It catalyses the reaction 2 D-sedoheptulose 7-phosphate = D-glycero-alpha-D-manno-heptose 7-phosphate + D-glycero-beta-D-manno-heptose 7-phosphate. It functions in the pathway carbohydrate biosynthesis; D-glycero-D-manno-heptose 7-phosphate biosynthesis; D-glycero-alpha-D-manno-heptose 7-phosphate and D-glycero-beta-D-manno-heptose 7-phosphate from sedoheptulose 7-phosphate: step 1/1. In terms of biological role, catalyzes the isomerization of sedoheptulose 7-phosphate in D-glycero-D-manno-heptose 7-phosphate. This Salmonella dublin (strain CT_02021853) protein is Phosphoheptose isomerase.